The primary structure comprises 38 residues: RapG inhibitor (38 aa).

A propeptide spanning residues 1 to 33 (MKRFLIGAGVAAVILSGWFIADHQTHSQEMKVA) is cleaved from the precursor.

It belongs to the Phr family. Post-translationally, contains a predicted signal peptide cleavage site in the N-terminal region, however the propeptide is probably subject to only one processing event, at the N-terminal end of the mature peptide.

It localises to the secreted. It is found in the cytoplasm. Its function is as follows. Signaling molecule involved in the regulation of expression of DegU-controlled genes. Secreted during production, but the mature peptide acts intracellularly, indicating that it needs to be imported into the cell to function. Stimulates the DegU-dependent expression of aprE, an extracellular alkaline protease. Acts by inhibiting RapG activity. At high concentrations, represses the DegS-dependent aprE expression. The protein is RapG inhibitor (phrG) of Bacillus subtilis (strain 168).